We begin with the raw amino-acid sequence, 531 residues long: Keratin, type II cytoskeletal 79 (531 aa).

The segment covering 1–12 (MRSSLSRQTFST) has biased composition (polar residues). A disordered region spans residues 1 to 55 (MRSSLSRQTFSTKGGFSSNSASGGGGSRMRTSYSSVTMSRGSGGGGGVRSGSSSG). Residues 1–138 (MRSSLSRQTF…DPEIQRVRTQ (138 aa)) are head. The span at 28–40 (RMRTSYSSVTMSR) shows a compositional bias: low complexity. Residues 41-55 (GSGGGGGVRSGSSSG) show a composition bias toward gly residues. Positions 139–174 (EREQIKTLNNKFASFIDKVRFLEQQNKVLETKWALL) are coil 1A. The 315-residue stretch at 139–453 (EREQIKTLNN…KLLESEESRM (315 aa)) folds into the IF rod domain. The interval 175–194 (QEQSQNTGVARSLEPFFENY) is linker 1. The segment at 195–286 (LSTLRRQLDT…QLFEMELSQV (92 aa)) is coil 1B. Positions 287-310 (QTNVSDTNVILSMDNNRNLDLDSI) are linker 12. Residues 311 to 449 (IAEVKAQYEL…ATYRKLLESE (139 aa)) are coil 2. Positions 450–531 (ESRMSGDCPS…TTVKTSSRRY (82 aa)) are tail.

The protein belongs to the intermediate filament family. As to quaternary structure, heterotetramer of two type I and two type II keratins.

The polypeptide is Keratin, type II cytoskeletal 79 (Krt79) (Mus musculus (Mouse)).